Reading from the N-terminus, the 202-residue chain is dTTP/UTP pyrophosphatase (202 aa).

Catalysis depends on D74, which acts as the Proton acceptor.

It belongs to the Maf family. YhdE subfamily. It depends on a divalent metal cation as a cofactor.

The protein resides in the cytoplasm. The catalysed reaction is dTTP + H2O = dTMP + diphosphate + H(+). It carries out the reaction UTP + H2O = UMP + diphosphate + H(+). Functionally, nucleoside triphosphate pyrophosphatase that hydrolyzes dTTP and UTP. May have a dual role in cell division arrest and in preventing the incorporation of modified nucleotides into cellular nucleic acids. This chain is dTTP/UTP pyrophosphatase, found in Methylococcus capsulatus (strain ATCC 33009 / NCIMB 11132 / Bath).